The sequence spans 85 residues: Beta-insect depressant toxin Lqh-dprIT3e (85 aa).

Positions 1–21 (MKLLLLLTISASMLIEGLVNA) are cleaved as a signal peptide. Residues 22–82 (DGYIRGGDGC…EWDYETDTCG (61 aa)) form the LCN-type CS-alpha/beta domain. 4 disulfides stabilise this stretch: cysteine 31–cysteine 81, cysteine 35–cysteine 56, cysteine 42–cysteine 63, and cysteine 46–cysteine 65. The residue at position 82 (glycine 82) is a Glycine amide.

The protein belongs to the long (4 C-C) scorpion toxin superfamily. Sodium channel inhibitor family. Beta subfamily. In terms of tissue distribution, expressed by the venom gland.

It localises to the secreted. Depressant insect beta-toxins cause a transient contraction paralysis followed by a slow flaccid paralysis. They bind voltage-independently at site-4 of sodium channels (Nav) and block action potentials, primarily by depolarizing the axonal membrane and suppressing the sodium current. This depressant toxin is active only on insects. It is found in a relatively small amount in the venom. The polypeptide is Beta-insect depressant toxin Lqh-dprIT3e (Leiurus hebraeus (Hebrew deathstalker scorpion)).